The chain runs to 350 residues: GTP 3',8-cyclase (350 aa).

Residues 27–245 (TFGRIATDLR…LRAHFTLVPD (219 aa)) enclose the Radical SAM core domain. Arginine 36 contributes to the GTP binding site. [4Fe-4S] cluster contacts are provided by cysteine 43 and cysteine 47. Residue tyrosine 49 participates in S-adenosyl-L-methionine binding. Cysteine 50 contacts [4Fe-4S] cluster. Arginine 87 lines the GTP pocket. Glycine 91 provides a ligand contact to S-adenosyl-L-methionine. Threonine 118 serves as a coordination point for GTP. Serine 142 provides a ligand contact to S-adenosyl-L-methionine. A GTP-binding site is contributed by lysine 179. Methionine 213 contributes to the S-adenosyl-L-methionine binding site. 2 residues coordinate [4Fe-4S] cluster: cysteine 277 and cysteine 280. 282-284 (RTR) is a binding site for GTP. Cysteine 294 contacts [4Fe-4S] cluster.

The protein belongs to the radical SAM superfamily. MoaA family. In terms of assembly, monomer and homodimer. Requires [4Fe-4S] cluster as cofactor.

It carries out the reaction GTP + AH2 + S-adenosyl-L-methionine = (8S)-3',8-cyclo-7,8-dihydroguanosine 5'-triphosphate + 5'-deoxyadenosine + L-methionine + A + H(+). The protein operates within cofactor biosynthesis; molybdopterin biosynthesis. Its function is as follows. Catalyzes the cyclization of GTP to (8S)-3',8-cyclo-7,8-dihydroguanosine 5'-triphosphate. This is GTP 3',8-cyclase from Mycobacterium sp. (strain JLS).